The chain runs to 265 residues: Mlc titration factor A (265 aa).

His111, His148, His152, and Glu211 together coordinate Zn(2+).

The protein belongs to the MtfA family. As to quaternary structure, interacts with Mlc. Zn(2+) serves as cofactor.

The protein localises to the cytoplasm. In terms of biological role, involved in the modulation of the activity of the glucose-phosphotransferase system (glucose-PTS). Interacts with the transcriptional repressor Mlc, preventing its interaction with DNA and leading to the modulation of expression of genes regulated by Mlc, including ptsG, which encodes the PTS system glucose-specific EIICB component. Its function is as follows. Shows zinc-dependent metallopeptidase activity. This Salmonella schwarzengrund (strain CVM19633) protein is Mlc titration factor A.